A 438-amino-acid chain; its full sequence is UDP-N-acetylmuramoylalanine--D-glutamate ligase (438 aa).

An ATP-binding site is contributed by 112–118; that stretch reads GSNGKST.

It belongs to the MurCDEF family.

It is found in the cytoplasm. The enzyme catalyses UDP-N-acetyl-alpha-D-muramoyl-L-alanine + D-glutamate + ATP = UDP-N-acetyl-alpha-D-muramoyl-L-alanyl-D-glutamate + ADP + phosphate + H(+). It functions in the pathway cell wall biogenesis; peptidoglycan biosynthesis. Functionally, cell wall formation. Catalyzes the addition of glutamate to the nucleotide precursor UDP-N-acetylmuramoyl-L-alanine (UMA). The polypeptide is UDP-N-acetylmuramoylalanine--D-glutamate ligase (Shigella dysenteriae serotype 1 (strain Sd197)).